A 244-amino-acid chain; its full sequence is 14-3-3 protein beta/alpha-1 (244 aa).

Met1 carries the N-acetylmethionine modification.

This sequence belongs to the 14-3-3 family. As to quaternary structure, homodimer, and heterodimer with other family members. As to expression, expressed in brain, gill, heart, intestine, kidney, liver, ovary, skin, spleen and testis.

Its subcellular location is the cytoplasm. Functionally, adapter protein implicated in the regulation of a large spectrum of both general and specialized signaling pathways. Binds to a large number of partners, usually by recognition of a phosphoserine or phosphothreonine motif. Binding generally results in the modulation of the activity of the binding partner. This is 14-3-3 protein beta/alpha-1 from Oncorhynchus mykiss (Rainbow trout).